The sequence spans 627 residues: MALVSIAPLASKSCLHKSLSSSAHELKTICRTIPTLGMSRRGKSATPSMSMSLTTTVSDDGVQRRMGDFHSNLWNDDFIQSLSTSYGEPSYRERAERLIGEVKKMFNSMSSEDGELINPHNDLIQRVWMVDSVERLGIERHFKNEIKSALDYVYSYWSEKGIGCGRESVVADLNSTALGLRTLRLHGYAVSADVLNLFKDQNGQFACSPSQTEEEIGSVLNLYRASLIAFPGEKVMEEAEIFSAKYLEEALQKISVSSLSQEIRDVLEYGWHTYLPRMEARNHIDVFGQDTQNSKSCINTEKLLELAKLEFNIFHSLQKRELEYLVRWWKDSGSPQMTFGRHRHVEYYTLASCIAFEPQHSGFRLGFAKTCHIITILDDMYDTFGTVDELELFTAAMKRWNPSAADCLPEYMKGMYMIVYDTVNEICQEAEKAQGRNTLDYARQAWDEYLDSYMQEAKWIVTGYLPTFAEYYENGKVSSGHRTAALQPILTMDIPFPPHILKEVDFPSKLNDLACAILRLRGDTRCYKADRARGEEASSISCYMKDNPGVTEEDALDHINAMISDVIRGLNWELLNPNSSVPISSKKHVFDISRAFHYGYKYRDGYSVANIETKSLVKRTVIDPVTL.

A chloroplast-targeting transit peptide spans 1–36; the sequence is MALVSIAPLASKSCLHKSLSSSAHELKTICRTIPTL. Residues aspartate 378, aspartate 382, and aspartate 530 each coordinate Mg(2+). The DDXXD motif motif lies at 378–382; that stretch reads DDMYD.

Belongs to the terpene synthase family. Tpsd subfamily. The cofactor is Mg(2+). Mn(2+) is required as a cofactor.

It localises to the plastid. It is found in the chloroplast. The enzyme catalyses (2E)-geranyl diphosphate = (1S,5S)-beta-pinene + diphosphate. It catalyses the reaction (2E)-geranyl diphosphate = (1S,5S)-alpha-pinene + diphosphate. It functions in the pathway terpene metabolism; oleoresin biosynthesis. Its function is as follows. Terpene synthase (TPS) involved in the biosynthesis of monoterpene natural products included in conifer oleoresin secretions and volatile emissions; these compounds contribute to biotic and abiotic stress defense against herbivores and pathogens. Catalyzes the conversion of (2E)-geranyl diphosphate (GPP) to (1S,5S)-beta-pinene. This chain is (-)-alpha-pinene synthase 2, chloroplastic, found in Picea glauca (White spruce).